We begin with the raw amino-acid sequence, 240 residues long: MLKKLCVILFISSITINSHAKNMYDNVDTATSYDSTYYENEGSLVFKMRLGGIFASAKQKGLPTHSSVQPVSVGEIAKNGYGGDASTTIFFNNYLAAELSLGFNVLRTKYTSLAAVAHNYGINNVKLGKHKPIYMIPATLTGQFHIAPYGGIRPYIGIGYHGSYMLTQATGLKIRNGYNAVGQIGVDFYAKDDTLINIDVRQFFLKPKLEYKSNLVGNKKVTSKVKLNPLIVSIGIGFTF.

Residues 1–20 (MLKKLCVILFISSITINSHA) form the signal peptide.

The protein belongs to the OmpW/AlkL family.

The protein resides in the cell outer membrane. In Rickettsia typhi (strain ATCC VR-144 / Wilmington), this protein is Putative outer membrane protein RT0057.